Consider the following 416-residue polypeptide: Thyroid hormone receptor alpha (416 aa).

Polar residues predominate over residues 1 to 13 (MEPMSNKQDSNSS). Positions 1–37 (MEPMSNKQDSNSSEGDEKGWPDVPKRKRKNSQCSMKS) are disordered. The segment at 1–58 (MEPMSNKQDSNSSEGDEKGWPDVPKRKRKNSQCSMKSMSALSVSVPGYIPSYLEKDEP) is modulating. Over residues 15 to 24 (GDEKGWPDVP) the composition is skewed to basic and acidic residues. 8 residues coordinate Zn(2+): cysteine 59, cysteine 62, cysteine 76, cysteine 79, cysteine 97, cysteine 103, cysteine 113, and cysteine 116. NR C4-type zinc fingers lie at residues 59 to 79 (CVVC…CEGC) and 97 to 121 (CKYE…FKKC). Residues 59–133 (CVVCGDKATG…VGMAMDLVLD (75 aa)) constitute a DNA-binding region (nuclear receptor). An NR LBD domain is found at 169-413 (AEWELIRMAT…PPLFLEVFED (245 aa)). Residue arginine 234 participates in 3,3',5-triiodo-L-thyronine binding.

It belongs to the nuclear hormone receptor family. NR1 subfamily.

The protein resides in the nucleus. Nuclear hormone receptor that can act as a repressor or activator of transcription. High affinity receptor for thyroid hormones, including triiodothyronine and thyroxine. The protein is Thyroid hormone receptor alpha (thra) of Hippoglossus hippoglossus (Atlantic halibut).